The sequence spans 1270 residues: DNA-directed RNA polymerase subunit beta (1270 aa).

It belongs to the RNA polymerase beta chain family. In terms of assembly, the RNAP catalytic core consists of 2 alpha, 1 beta, 1 beta' and 1 omega subunit. When a sigma factor is associated with the core the holoenzyme is formed, which can initiate transcription.

It catalyses the reaction RNA(n) + a ribonucleoside 5'-triphosphate = RNA(n+1) + diphosphate. In terms of biological role, DNA-dependent RNA polymerase catalyzes the transcription of DNA into RNA using the four ribonucleoside triphosphates as substrates. The chain is DNA-directed RNA polymerase subunit beta from Bacteroides thetaiotaomicron (strain ATCC 29148 / DSM 2079 / JCM 5827 / CCUG 10774 / NCTC 10582 / VPI-5482 / E50).